The following is a 346-amino-acid chain: NADH-ubiquinone oxidoreductase chain 2 (346 aa).

A run of 10 helical transmembrane segments spans residues 3–23, 25–45, 67–87, 96–116, 122–142, 145–165, 200–220, 238–258, 273–293, and 324–344; these read PIIF…VMIS, HWLL…PIMM, SMLL…WTVM, MLMT…FWVP, IPLS…MSVL, IFPS…ILIG, TLLN…MFMA, IMTI…PLSG, NSII…YFYM, and FLPT…MLSV.

It belongs to the complex I subunit 2 family. Core subunit of respiratory chain NADH dehydrogenase (Complex I) which is composed of 45 different subunits. Interacts with TMEM242.

It is found in the mitochondrion inner membrane. It carries out the reaction a ubiquinone + NADH + 5 H(+)(in) = a ubiquinol + NAD(+) + 4 H(+)(out). Functionally, core subunit of the mitochondrial membrane respiratory chain NADH dehydrogenase (Complex I) which catalyzes electron transfer from NADH through the respiratory chain, using ubiquinone as an electron acceptor. Essential for the catalytic activity and assembly of complex I. The polypeptide is NADH-ubiquinone oxidoreductase chain 2 (Bos mutus grunniens (Wild yak)).